Consider the following 125-residue polypeptide: Phosphoribosyl-AMP cyclohydrolase (125 aa).

D74 lines the Mg(2+) pocket. C75 is a Zn(2+) binding site. Mg(2+) contacts are provided by D76 and D78. Zn(2+)-binding residues include C92 and C99.

Belongs to the PRA-CH family. As to quaternary structure, homodimer. Mg(2+) serves as cofactor. The cofactor is Zn(2+).

The protein localises to the cytoplasm. The catalysed reaction is 1-(5-phospho-beta-D-ribosyl)-5'-AMP + H2O = 1-(5-phospho-beta-D-ribosyl)-5-[(5-phospho-beta-D-ribosylamino)methylideneamino]imidazole-4-carboxamide. The protein operates within amino-acid biosynthesis; L-histidine biosynthesis; L-histidine from 5-phospho-alpha-D-ribose 1-diphosphate: step 3/9. In terms of biological role, catalyzes the hydrolysis of the adenine ring of phosphoribosyl-AMP. In Citrifermentans bemidjiense (strain ATCC BAA-1014 / DSM 16622 / JCM 12645 / Bem) (Geobacter bemidjiensis), this protein is Phosphoribosyl-AMP cyclohydrolase.